Consider the following 222-residue polypeptide: Transmembrane reductase CYB561D2 (222 aa).

At 2-17 the chain is on the cytoplasmic side; the sequence is ALSVETESHIYRALRT. Positions 14 to 217 constitute a Cytochrome b561 domain; sequence ALRTASGAAA…NQVSNAYLYR (204 aa). A helical membrane pass occupies residues 18-38; sequence ASGAAAHLVALGFTIFVAVLA. The Lumenal portion of the chain corresponds to 39–46; that stretch reads RPGSSLFS. Residues 47-67 form a helical membrane-spanning segment; it reads WHPVLMSLAFSFLMTEALLMF. His-48 contributes to the heme b binding site. Residues 68–85 lie on the Cytoplasmic side of the membrane; sequence SPESSLLRSLSRKVRARC. His-86 and His-120 together coordinate heme b. A helical membrane pass occupies residues 86–106; the sequence is HWVLQLLALLCALLGLGLVIL. The Lumenal segment spans residues 107–122; that stretch reads HKEQLGKAHLTTRHGQ. The helical transmembrane segment at 123–143 threads the bilayer; it reads AGLLAVLWAGLQCSGGMGLLY. The Cytoplasmic segment spans residues 144-162; that stretch reads PKLLPRWPLAKLKLYHATS. His-159 contributes to the heme b binding site. Residues 163 to 183 traverse the membrane as a helical segment; sequence GLVGYLLGSASLLLGMFSLWF. Residues 184 to 186 are Lumenal-facing; sequence TAT. The helical transmembrane segment at 187 to 207 threads the bilayer; it reads VTGGAWYLAVLCPILTSLVIM. Topologically, residues 208 to 222 are cytoplasmic; sequence NQVSNAYLYRKRIQP.

Heme b serves as cofactor. As to expression, highly expressed in the brain, lung, liver, and kidney. Moderately expressed in the heart, placenta, skeletal muscle, and pancreas.

The protein localises to the endoplasmic reticulum membrane. It is found in the cytoplasmic vesicle membrane. The enzyme catalyses monodehydro-L-ascorbate radical(out) + L-ascorbate(in) = monodehydro-L-ascorbate radical(in) + L-ascorbate(out). It catalyses the reaction Fe(3+)(out) + L-ascorbate(in) = monodehydro-L-ascorbate radical(in) + Fe(2+)(out) + H(+). Functionally, transmembrane reductase that may use ascorbate as an electron donor in the cytoplasm and transfer electrons across endoplasmic reticulum membranes to reduce monodehydro-L-ascorbate radical and iron cations Fe(3+) in the lumen of that compartment. The chain is Transmembrane reductase CYB561D2 from Mus musculus (Mouse).